Consider the following 426-residue polypeptide: Torsin-4A (426 aa).

The interval 41 to 60 (QPGTEPDSGTGTLGPTGSLG) is disordered. Residues 48-60 (SGTGTLGPTGSLG) are compositionally biased toward low complexity. Residues serine 58 and serine 76 each carry the phosphoserine modification. A Phosphothreonine modification is found at threonine 84. At serine 101 the chain carries Phosphoserine. Residues 117 to 133 (CLLLLVAIVGFQVLNAI) form a helical membrane-spanning segment. Residue 189–196 (GPSGVGKS) participates in ATP binding.

The protein belongs to the ClpA/ClpB family. Torsin subfamily.

It localises to the membrane. The protein is Torsin-4A (Tor4a) of Mus musculus (Mouse).